Reading from the N-terminus, the 323-residue chain is uncharacterized protein (323 aa).

It localises to the mitochondrion. This is an uncharacterized protein from Schizosaccharomyces pombe (strain 972 / ATCC 24843) (Fission yeast).